The chain runs to 860 residues: Leucine--tRNA ligase (860 aa).

The 'HIGH' region signature appears at 42–52 (PYPSGRLHMGH). A 'KMSKS' region motif is present at residues 619-623 (KMSKS). Lys-622 provides a ligand contact to ATP.

Belongs to the class-I aminoacyl-tRNA synthetase family.

It is found in the cytoplasm. It catalyses the reaction tRNA(Leu) + L-leucine + ATP = L-leucyl-tRNA(Leu) + AMP + diphosphate. In Histophilus somni (strain 129Pt) (Haemophilus somnus), this protein is Leucine--tRNA ligase.